We begin with the raw amino-acid sequence, 274 residues long: Protein RecA (274 aa).

Residue 43 to 50 coordinates ATP; sequence GPESSGKT.

The protein belongs to the RecA family.

Its subcellular location is the cytoplasm. Functionally, can catalyze the hydrolysis of ATP in the presence of single-stranded DNA, the ATP-dependent uptake of single-stranded DNA by duplex DNA, and the ATP-dependent hybridization of homologous single-stranded DNAs. It interacts with LexA causing its activation and leading to its autocatalytic cleavage. In Neisseria mucosa, this protein is Protein RecA.